We begin with the raw amino-acid sequence, 301 residues long: Phospholipase A1 VesT1.02 (301 aa).

6 disulfides stabilise this stretch: cysteine 87–cysteine 294, cysteine 176–cysteine 245, cysteine 181–cysteine 262, cysteine 219–cysteine 228, cysteine 240–cysteine 246, and cysteine 267–cysteine 269. Serine 137 (nucleophile) is an active-site residue. The active-site Charge relay system is aspartate 165. The active-site Charge relay system is histidine 230.

This sequence belongs to the AB hydrolase superfamily. Lipase family. Post-translationally, is not glycosylated. Expressed by the venom gland.

The protein resides in the secreted. The catalysed reaction is a 1,2-diacyl-sn-glycero-3-phosphocholine + H2O = a 2-acyl-sn-glycero-3-phosphocholine + a fatty acid + H(+). In terms of biological role, catalyzes the hydrolysis of phosphatidylcholine with phospholipase A1 activity. Shows hemolytic activity. The polypeptide is Phospholipase A1 VesT1.02 (Vespa tropica (Greater banded hornet)).